Consider the following 607-residue polypeptide: Aspartate--tRNA(Asp/Asn) ligase (607 aa).

E173 provides a ligand contact to L-aspartate. Residues 197–200 (QLFK) are aspartate. R219 is a binding site for L-aspartate. Residues 219-221 (RDE) and Q228 each bind ATP. H456 contributes to the L-aspartate binding site. E498 contacts ATP. Residue R505 participates in L-aspartate binding. 550–553 (GLDR) is a binding site for ATP.

Belongs to the class-II aminoacyl-tRNA synthetase family. Type 1 subfamily. Homodimer.

Its subcellular location is the cytoplasm. The catalysed reaction is tRNA(Asx) + L-aspartate + ATP = L-aspartyl-tRNA(Asx) + AMP + diphosphate. Functionally, aspartyl-tRNA synthetase with relaxed tRNA specificity since it is able to aspartylate not only its cognate tRNA(Asp) but also tRNA(Asn). Reaction proceeds in two steps: L-aspartate is first activated by ATP to form Asp-AMP and then transferred to the acceptor end of tRNA(Asp/Asn). This Magnetococcus marinus (strain ATCC BAA-1437 / JCM 17883 / MC-1) protein is Aspartate--tRNA(Asp/Asn) ligase.